Here is a 786-residue protein sequence, read N- to C-terminus: MNLSNKELEGLDEIISDHREDFCPFLGRIEEEDKQFFLSSEMKEMYAGDTVPDFIASLQEAVKMPGQIYFATRASIGEWAFVTVFTDTLDYMEVSPTEYQEAKEKTVLGENAAWMPSVDLKPFNRDFPKPSSADFIGKGVEFLNRHQSSRIFMNPEKGLKQLLDFLRVHKYDGRQLMLNNRIDSVDKLKKALKKAQALLKNKSDETEWEEVESDMAHLGFEPGWGKKLGYVKEFLALLSDILAAPEPVVLEKFLDRIPMIFSLVVLSPHGFFGQAGVFGKPDTGGQVVYILDQVKALEHELKSRLDEKGLDITPKILVVTRLIPEAEGTNCDMEEELIRGTDNCHIVRVPFRDESGEVVRQWISRFRIWPYLERFSTEAQNIILSKLQGNPDLIIGNYSDGNLVASLIAQRLGVTQCTIAHALEKTKYLYSDLYWQDNNDKYHFACQYTADLISMNYSDFIITSTYQEIAGTNDSVGQYESYMNYTLPGLYRVVNGIDVFDPKFNVVSPGAAPDIFFSYKSKDRFPEHIEEIESILFEDNLEGSRGSLADPDKPLIFTMARLDKIKNLTGLVRWFGENEELRKTANLLVIGGFVDESLSSDDEEREQIRIMHSVIDELGLDGSVRWVGAHLGKRMTGEFYRYVADRKGVFVQPALFEAFGLTIIEAMSSGLPVFATVYGGPSEIIEDGKSGFTLDPNKGDECAEKLLEFIQKCQSDPGHWIKISDNALKRVEERYNWPLYAKRLMTFARVYGFWKFVTNLEREETVRYLEMLYGMVYRRLADPKEY.

A GT-B glycosyltransferase region spans residues 259 to 736 (MIFSLVVLSP…ALKRVEERYN (478 aa)).

Belongs to the glycosyltransferase 1 family. As to quaternary structure, homotetramer.

It carries out the reaction an NDP-alpha-D-glucose + D-fructose = a ribonucleoside 5'-diphosphate + sucrose + H(+). Functionally, catalyzes the reversible conversion of sucrose and a nucleotide disphosphate (NDP) into fructose and NDP-glucose; although the reaction is freely reversible in vitro, the physiological reaction seems to be sucrose cleavage. Unlike characterized plant enzymes prefers ADP as a cosubstrate, whereas plants prefer UDP. Its preference for ADP over UDP suggests it may directly link sucrose and glycogen metabolism. In Denitrovibrio acetiphilus (strain DSM 12809 / NBRC 114555 / N2460), this protein is Sucrose synthase.